The primary structure comprises 490 residues: MARFDLQKLYIDGGYSDAGSDATFEAINPANGEVLAQVQRATKEDVERAVVSAEKGQKIWAAMTAMERSRILRRAVDILRERNDELAALETLDTGKAFSETQYVDVVTGADVLEYYAGLVPAIEGEQIPLRDTSFVYTRREPLGVVAGIGAWNYPIQIALWKSAPALAAGNAMIFKPSEVTSLTTLKLAEIYTEAGVPAGVFNVLTGSGREVGTWLTEHPRIEKVSFTGGTDTGKKVMASASSSSLKEVTMELGGKSPLIVFEDADLDRAADIAMMANFYSSGQVCTNGTRVFVPKHLQAAFEAKIVERVARIRVGDPQDENTNFGPLVSFAHMESVLGYIAKGKEQGARLLCGGDRLTDGDFAKGAYVAPTVFTDCTDEMTIVREEIFGPVMSILTYETEEEVIRRANDTDFGLAAGLVTKDLNRAHRVIHQLEAGICWINAWGESDAKMPVGGYKQSGVGRENGISSLNNFTRIKSVQVELGDYASVF.

2 residues coordinate K(+): Ile-27 and Asp-93. 150–152 (GAW) contacts NAD(+). The Charge relay system role is filled by Lys-162. Residue 176–179 (KPSE) participates in NAD(+) binding. Val-180 contributes to the K(+) binding site. 230–233 (GTDT) is a binding site for NAD(+). Leu-246 contacts K(+). Catalysis depends on Glu-252, which acts as the Proton acceptor. Gly-254, Cys-286, and Glu-387 together coordinate NAD(+). The active-site Nucleophile is Cys-286. Residue Cys-286 is modified to Cysteine sulfenic acid (-SOH). Lys-457 and Gly-460 together coordinate K(+). Glu-464 serves as the catalytic Charge relay system.

This sequence belongs to the aldehyde dehydrogenase family. As to quaternary structure, dimer of dimers. The cofactor is K(+).

It carries out the reaction betaine aldehyde + NAD(+) + H2O = glycine betaine + NADH + 2 H(+). It participates in amine and polyamine biosynthesis; betaine biosynthesis via choline pathway; betaine from betaine aldehyde: step 1/1. Involved in the biosynthesis of the osmoprotectant glycine betaine. Catalyzes the irreversible oxidation of betaine aldehyde to the corresponding acid. This Pseudomonas fluorescens (strain SBW25) protein is Betaine aldehyde dehydrogenase.